A 129-amino-acid polypeptide reads, in one-letter code: Large ribosomal subunit protein eL32 (129 aa).

The protein belongs to the eukaryotic ribosomal protein eL32 family.

The sequence is that of Large ribosomal subunit protein eL32 (rpl32e) from Archaeoglobus fulgidus (strain ATCC 49558 / DSM 4304 / JCM 9628 / NBRC 100126 / VC-16).